The primary structure comprises 350 residues: Protein-glutamate methylesterase/protein-glutamine glutaminase (350 aa).

Residues 5-122 (KVLCVDDSAL…RDGLIEYSEV (118 aa)) form the Response regulatory domain. Asp56 carries the 4-aspartylphosphate modification. The region spanning 152–346 (PFASSEKLVI…ERILTRLGDR (195 aa)) is the CheB-type methylesterase domain. Active-site residues include Ser165, His191, and Asp288.

It belongs to the CheB family. In terms of processing, phosphorylated by CheA. Phosphorylation of the N-terminal regulatory domain activates the methylesterase activity.

It localises to the cytoplasm. The enzyme catalyses [protein]-L-glutamate 5-O-methyl ester + H2O = L-glutamyl-[protein] + methanol + H(+). The catalysed reaction is L-glutaminyl-[protein] + H2O = L-glutamyl-[protein] + NH4(+). Functionally, involved in chemotaxis. Part of a chemotaxis signal transduction system that modulates chemotaxis in response to various stimuli. Catalyzes the demethylation of specific methylglutamate residues introduced into the chemoreceptors (methyl-accepting chemotaxis proteins or MCP) by CheR. Also mediates the irreversible deamidation of specific glutamine residues to glutamic acid. The chain is Protein-glutamate methylesterase/protein-glutamine glutaminase from Bordetella pertussis (strain Tohama I / ATCC BAA-589 / NCTC 13251).